A 291-amino-acid polypeptide reads, in one-letter code: 33 kDa chaperonin (291 aa).

Intrachain disulfides connect Cys235–Cys237 and Cys268–Cys271.

It belongs to the HSP33 family. In terms of processing, under oxidizing conditions two disulfide bonds are formed involving the reactive cysteines. Under reducing conditions zinc is bound to the reactive cysteines and the protein is inactive.

It is found in the cytoplasm. Functionally, redox regulated molecular chaperone. Protects both thermally unfolding and oxidatively damaged proteins from irreversible aggregation. Plays an important role in the bacterial defense system toward oxidative stress. The protein is 33 kDa chaperonin of Streptococcus agalactiae serotype III (strain NEM316).